The chain runs to 112 residues: ATP synthase subunit c (112 aa).

2 consecutive transmembrane segments (helical) span residues Phe-36 to Met-56 and Met-81 to Ile-101.

It belongs to the ATPase C chain family. In terms of assembly, F-type ATPases have 2 components, F(1) - the catalytic core - and F(0) - the membrane proton channel. F(1) has five subunits: alpha(3), beta(3), gamma(1), delta(1), epsilon(1). F(0) has three main subunits: a(1), b(2) and c(10-14). The alpha and beta chains form an alternating ring which encloses part of the gamma chain. F(1) is attached to F(0) by a central stalk formed by the gamma and epsilon chains, while a peripheral stalk is formed by the delta and b chains.

It is found in the cell inner membrane. Its function is as follows. F(1)F(0) ATP synthase produces ATP from ADP in the presence of a proton or sodium gradient. F-type ATPases consist of two structural domains, F(1) containing the extramembraneous catalytic core and F(0) containing the membrane proton channel, linked together by a central stalk and a peripheral stalk. During catalysis, ATP synthesis in the catalytic domain of F(1) is coupled via a rotary mechanism of the central stalk subunits to proton translocation. Functionally, key component of the F(0) channel; it plays a direct role in translocation across the membrane. A homomeric c-ring of between 10-14 subunits forms the central stalk rotor element with the F(1) delta and epsilon subunits. This chain is ATP synthase subunit c, found in Campylobacter jejuni (strain RM1221).